A 207-amino-acid chain; its full sequence is Gap junction epsilon-1 protein (207 aa).

At 1–22 the chain is on the cytoplasmic side; it reads MSLNYIKNFYEGCLRPPTVIGQ. A helical transmembrane segment spans residues 23-43; sequence FHTLFFGSVRTFFLGVLGFAV. Residues 44 to 74 are Extracellular-facing; the sequence is YGNEALHFSCDPDKRELNLYCYNQFRPITPQ. Intrachain disulfides connect Cys-53–Cys-161 and Cys-64–Cys-147. A helical transmembrane segment spans residues 75-95; that stretch reads VFWALQLVTVLVPGAVFHLYA. At 96 to 111 the chain is on the cytoplasmic side; that stretch reads ACKNIDQEEILHRPMS. The chain crosses the membrane as a helical span at residues 112 to 132; the sequence is TVFYIISVLLRIILEVLAFWL. Over 133 to 175 the chain is Extracellular; that stretch reads QSHLFGFLVDPIFMCDVTGLGKILNVSKCMVPEHFEKTIFLSA. The chain crosses the membrane as a helical span at residues 176–196; the sequence is MYTFTIITILLCIAEIFEILF. The Cytoplasmic portion of the chain corresponds to 197–207; sequence RRLGYLNQPMT.

It belongs to the connexin family. Beta-type (group I) subfamily. A connexon is composed of a hexamer of connexins.

Its subcellular location is the cell membrane. Has significant hemichannel activity. However, has only low-efficiency gap junction activity and probably does not function as a gap junction channel in vivo. The protein is Gap junction epsilon-1 protein of Danio rerio (Zebrafish).